Here is a 43-residue protein sequence, read N- to C-terminus: Potassium channel toxin gamma-KTx 4.5 (43 aa).

Disulfide bonds link cysteine 5–cysteine 23, cysteine 11–cysteine 34, cysteine 20–cysteine 39, and cysteine 24–cysteine 41.

The protein belongs to the ergtoxin family. Gamma-KTx 4 subfamily. Expressed by the venom gland.

The protein localises to the secreted. Functionally, reversibly blocks Kv11/ERG potassium channels. The chain is Potassium channel toxin gamma-KTx 4.5 from Centruroides exilicauda (Bark scorpion).